The primary structure comprises 62 residues: Protein translocase subunit SecE (62 aa).

A helical transmembrane segment spans residues 40 to 60; sequence LLVLAVVGVLAYIIQLALTLI.

It belongs to the SecE/SEC61-gamma family. Component of the Sec protein translocase complex. Heterotrimer consisting of SecY (alpha), SecG (beta) and SecE (gamma) subunits. The heterotrimers can form oligomers, although 1 heterotrimer is thought to be able to translocate proteins. Interacts with the ribosome. May interact with SecDF, and other proteins may be involved.

It is found in the cell membrane. Essential subunit of the Sec protein translocation channel SecYEG. Clamps together the 2 halves of SecY. May contact the channel plug during translocation. The chain is Protein translocase subunit SecE from Saccharolobus solfataricus (strain ATCC 35092 / DSM 1617 / JCM 11322 / P2) (Sulfolobus solfataricus).